Reading from the N-terminus, the 520-residue chain is Leucine aminopeptidase 1 (520 aa).

Residues Lys-288 and Asp-293 each coordinate Mn(2+). Lys-300 is an active-site residue. Mn(2+)-binding residues include Asp-313, Asp-373, and Glu-375. Arg-377 is a catalytic residue.

This sequence belongs to the peptidase M17 family. In terms of assembly, homohexamer (dimer of homotrimers). Mn(2+) serves as cofactor.

It is found in the cytoplasm. It carries out the reaction Release of an N-terminal amino acid, Xaa-|-Yaa-, in which Xaa is preferably Leu, but may be other amino acids including Pro although not Arg or Lys, and Yaa may be Pro. Amino acid amides and methyl esters are also readily hydrolyzed, but rates on arylamides are exceedingly low.. The enzyme catalyses Release of N-terminal proline from a peptide.. Its function is as follows. Presumably involved in the processing and regular turnover of intracellular proteins. Catalyzes the removal of unsubstituted N-terminal amino acids from various peptides. Possesses leucine aminopeptidase activity against the model substrate leucine-amido methyl coumarin. Possesses Cys-Gly dipeptidase activity. In addition, can cleave Cys-Leu and Leu-Cys dipeptides. In terms of biological role, functions as a molecular chaperone to protect proteins from heat-induced damage. The protein is Leucine aminopeptidase 1 of Arabidopsis thaliana (Mouse-ear cress).